Here is a 595-residue protein sequence, read N- to C-terminus: Probable xyloglucan glycosyltransferase 9 (595 aa).

2 helical membrane-spanning segments follow: residues 30 to 50 and 77 to 97; these read AFVV…INGW and ATYV…LFLI. Asp177 is an active-site residue. Residues Asp236 and Asp238 each contribute to the substrate site. Asp330 is a catalytic residue. A run of 4 helical transmembrane segments spans residues 408-428, 433-453, 545-564, and 570-590; these read LILP…TMFV, LPDW…ILPS, IYKK…ARSL, and IHFY…LDLI.

It belongs to the glycosyltransferase 2 family. Plant cellulose synthase-like C subfamily.

It localises to the golgi apparatus membrane. Its function is as follows. Probable beta-1,4-glucan synthase rather involved in the synthesis of the xyloglucan backbone than cellulose. Seems to work simultaneously with xyloglucan 6-xylosyltransferase. Xyloglucan is a noncellulosic polysaccharides of plant cell wall and consists of a glucan backbone substituted by xylose, galactose and fucose. The sequence is that of Probable xyloglucan glycosyltransferase 9 (CSLC9) from Oryza sativa subsp. japonica (Rice).